Reading from the N-terminus, the 351-residue chain is Nicotinate-nucleotide--dimethylbenzimidazole phosphoribosyltransferase (351 aa).

The active-site Proton acceptor is Glu317.

Belongs to the CobT family.

The enzyme catalyses 5,6-dimethylbenzimidazole + nicotinate beta-D-ribonucleotide = alpha-ribazole 5'-phosphate + nicotinate + H(+). The protein operates within nucleoside biosynthesis; alpha-ribazole biosynthesis; alpha-ribazole from 5,6-dimethylbenzimidazole: step 1/2. Its function is as follows. Catalyzes the synthesis of alpha-ribazole-5'-phosphate from nicotinate mononucleotide (NAMN) and 5,6-dimethylbenzimidazole (DMB). This Pseudomonas putida (strain ATCC 47054 / DSM 6125 / CFBP 8728 / NCIMB 11950 / KT2440) protein is Nicotinate-nucleotide--dimethylbenzimidazole phosphoribosyltransferase.